Consider the following 80-residue polypeptide: MKPGIHPEYREVVFQDIGADFSFLTRSTIAAKETIKWTDGKEYPLVKIEVSSQSHPFYTGKQKILDTAGRVEKFRQKYGM.

Belongs to the bacterial ribosomal protein bL31 family. Type B subfamily. As to quaternary structure, part of the 50S ribosomal subunit.

This is Large ribosomal subunit protein bL31B from Methylobacillus flagellatus (strain ATCC 51484 / DSM 6875 / VKM B-1610 / KT).